The following is a 320-amino-acid chain: Short-chain dehydrogenase/reductase ARMGADRAFT_1169971 (320 aa).

The chain crosses the membrane as a helical span at residues 19–39 (KVAVVTGANSGIGLYILFHVA). NADP(+) contacts are provided by Ile-30, Asp-78, Asn-105, and Lys-136. Asn-157 carries N-linked (GlcNAc...) asparagine glycosylation. Catalysis depends on Ser-159, which acts as the Proton donor. Tyr-192, Lys-196, Val-227, and Ser-229 together coordinate NADP(+). Residue Tyr-192 is the Proton acceptor of the active site. The active-site Lowers pKa of active site Tyr is Lys-196. The chain crosses the membrane as a helical span at residues 235–255 (LFTSLMFGTIINWVFSLFFIS).

Belongs to the short-chain dehydrogenases/reductases (SDR) family.

It is found in the membrane. It functions in the pathway secondary metabolite biosynthesis. Functionally, short-chain dehydrogenase/reductase, part of the gene cluster that mediates the biosynthesis of melleolides, a range of antifungal and phytotoxic polyketide derivatives composed of an orsellinic acid (OA) moiety esterified to various sesquiterpene alcohols. The first step in melleolides biosynthesis is performed by the delta(6)-protoilludene synthase PRO1 which catalyzes the cyclization of farnesyl diphosphate to protoilludene. The orsellinic acid synthase armB produces OA by condensing acetyl-CoA with 3 malonyl-CoA units in a three-round chain elongation reaction folowed by a C2-C7 ring closure. ArmB further catalyzes the trans-esterification of OA to the various sesquiterpene alcohols resulting from the hydroxylation of protoilludene. The melleolides cluster also includes 5 cytochrome P450 monooxygenases, 4 NAD(+)-dependent oxidoreductases, one flavin-dependent oxidoreductase, and one O-methyltransferase. The cytochrome P450 monooxygenases may be involved in protoilludene hydroxylation to elaborate melleolides with multiple alcohol groups, such as melleolide D, which carries alcohol functionalities at C-4, C-5, C-10, and C-13. The role of the NAD(+)-dependent enzymes remains unknown. Numerous melleolides, including arnamial, show 5'-O-methylation of the aromatic moiety which may be catalyzed by the methyltransferase encoded in the cluster. The flavin-dependent oxidoreductase might represent the dehydrogenase yielding the aldehyde in position 1 of arnamial and other melleolides. Finally, several halogenase localized outside of the cluster, are able to catalyze the transfer of a single chlorine atom to the melleolide backbone, resulting in a 6'-chloromelleolide product. This is Short-chain dehydrogenase/reductase ARMGADRAFT_1169971 from Armillaria gallica (Bulbous honey fungus).